Reading from the N-terminus, the 667-residue chain is Small ribosomal subunit protein mS39 (667 aa).

A mitochondrion-targeting transit peptide spans 1 to 11; sequence MASSCSQALRH. The tract at residues 199–226 is disordered; sequence EAEQRSEEMEDIQDETQTKKGRSPKASD. PPR repeat units follow at residues 249-283, 284-323, 324-360, 361-400, 482-516, and 565-599; these read NTRSYSALIRGMVKHAAYTQAFSTYTDLLNNRLKA, DVHIFNALLAAVPAVRPKYNEKWELILDLLKQMAEQKVKP, NLLTLNAILKSLRRCGALGRSQAFPVISEMKVLSIEP, SLASYNHLLAIFYRSGAQVQTPTDVLVEVMNEVSGKSFTP, SSNAMSDLLRALDTDSRLDLIPKIWKDMKQLGHGN, and TASSLSDVTTILLAANRKQEAWEMLKLFRTHNRVP.

It belongs to the mitochondrion-specific ribosomal protein mS39 family.

The protein resides in the mitochondrion. Its function is as follows. Mitochondrial RNA-binding protein that may have a role in mitochondrial translation. In Danio rerio (Zebrafish), this protein is Small ribosomal subunit protein mS39 (ptcd3).